Here is a 732-residue protein sequence, read N- to C-terminus: Ferric aerobactin receptor (732 aa).

Positions 1–25 are cleaved as a signal peptide; the sequence is MMISKKYTLWALNPLLLTMMAPAVA. The short motif at 31-38 is the TonB box element; that stretch reads ETFVVSAN. The TBDR plug domain occupies 43-153; that stretch reads TVAEMAQTTW…TGGLINIVTK (111 aa). Residues 158–732 enclose the TBDR beta-barrel domain; that stretch reads ETMMEFEAGT…TFGLNYSVLF (575 aa). The TonB C-terminal box signature appears at 715–732; it reads YDYKGRGRTFGLNYSVLF.

This sequence belongs to the TonB-dependent receptor family.

It is found in the cell outer membrane. In terms of biological role, receptor for cloacin DF13/aerobactin. The polypeptide is Ferric aerobactin receptor (iutA) (Escherichia coli).